The following is a 440-amino-acid chain: Platelet-activating factor acetylhydrolase (440 aa).

An N-terminal signal peptide occupies residues Met-1 to Pro-21. Residues Asn-59, Asn-75, and Asn-199 are each glycosylated (N-linked (GlcNAc...) asparagine). Ser-272 acts as the Nucleophile in catalysis. Residues Asp-295 and His-350 each act as charge relay system in the active site.

Belongs to the AB hydrolase superfamily. Lipase family. In terms of processing, N-glycosylated. Plasma.

It localises to the secreted. The protein resides in the extracellular space. It carries out the reaction a 1-O-alkyl-2-acetyl-sn-glycero-3-phosphocholine + H2O = a 1-O-alkyl-sn-glycero-3-phosphocholine + acetate + H(+). The enzyme catalyses 1-O-decyl-2-acetyl-sn-glycero-3-phosphocholine + H2O = 1-O-decyl-sn-glycero-3-phosphocholine + acetate + H(+). It catalyses the reaction 1-O-dodecyl-2-acetyl-sn-glycero-3-phosphocholine + H2O = 1-O-dodecyl-sn-glycero-3-phosphocholine + acetate + H(+). The catalysed reaction is 1-O-tetradecyl-2-acetyl-sn-glycero-3-phosphocholine + H2O = 1-O-tetradecyl-sn-glycero-3-phosphocholine + acetate + H(+). It carries out the reaction 1-O-hexadecyl-2-acetyl-sn-glycero-3-phosphocholine + H2O = 1-O-hexadecyl-sn-glycero-3-phosphocholine + acetate + H(+). The enzyme catalyses 1-O-octadecyl-2-acetyl-sn-glycero-3-phosphocholine + H2O = 1-O-octadecyl-sn-glycero-3-phosphocholine + acetate + H(+). It catalyses the reaction 1-hexadecanoyl-2-acetyl-sn-glycero-3-phosphocholine + H2O = 1-hexadecanoyl-sn-glycero-3-phosphocholine + acetate + H(+). The catalysed reaction is 1-hexadecanoyl-2-propionyl-sn-glycero-3-phosphocholine + H2O = propanoate + 1-hexadecanoyl-sn-glycero-3-phosphocholine + H(+). It carries out the reaction 1-hexadecanoyl-2-butanoyl-sn-glycero-3-phosphocholine + H2O = butanoate + 1-hexadecanoyl-sn-glycero-3-phosphocholine + H(+). The enzyme catalyses 1-hexadecanoyl-2-pentanoyl-sn-glycero-3-phosphocholine + H2O = pentanoate + 1-hexadecanoyl-sn-glycero-3-phosphocholine + H(+). It catalyses the reaction 1-hexadecanoyl-2-glutaroyl-sn-glycero-3-phosphocholine + H2O = glutarate + 1-hexadecanoyl-sn-glycero-3-phosphocholine + H(+). The catalysed reaction is 1-hexadecanoyl-2-(5-oxopentanoyl)-sn-glycero-3-phosphocholine + H2O = 5-oxopentanoate + 1-hexadecanoyl-sn-glycero-3-phosphocholine + H(+). It carries out the reaction 1-hexadecanoyl-2-(9-oxononanoyl)-sn-glycero-3-phosphocholine + H2O = 9-oxononanoate + 1-hexadecanoyl-sn-glycero-3-phosphocholine + H(+). The enzyme catalyses 1-hexadecanoyl-2-[9-hydroperoxy-(10E-octadecenoyl)]-sn-glycero-3-phosphocholine + H2O = 9-hydroperoxy-10E-octadecenoate + 1-hexadecanoyl-sn-glycero-3-phosphocholine + H(+). It catalyses the reaction 1-hexadecanoyl-2-(10-hydroperoxy-8E-octadecenoyl)-sn-glycero-3-phosphocholine + H2O = 10-hydroperoxy-(8E)-octadecenoate + 1-hexadecanoyl-sn-glycero-3-phosphocholine + H(+). Lipoprotein-associated calcium-independent phospholipase A2 involved in phospholipid catabolism during inflammatory and oxidative stress response. At the lipid-aqueous interface, hydrolyzes the ester bond of fatty acyl group attached at sn-2 position of phospholipids (phospholipase A2 activity). Specifically targets phospholipids with a short-chain fatty acyl group at sn-2 position. Can hydrolyze phospholipids with long fatty acyl chains, only if they carry oxidized functional groups. Hydrolyzes and inactivates platelet-activating factor (PAF, 1-O-alkyl-2-acetyl-sn-glycero-3-phosphocholine), a potent pro-inflammatory signaling lipid that acts through PTAFR on various innate immune cells. Hydrolyzes oxidatively truncated phospholipids carrying an aldehyde group at omega position, preventing their accumulation in lipoprotein particles and uncontrolled pro-inflammatory effects. As part of high-density lipoprotein (HDL) particles, can hydrolyze phospholipids having long-chain fatty acyl hydroperoxides at sn-2 position and protect against potential accumulation of these oxylipins in the vascular wall. Catalyzes the release from membrane phospholipids of F2-isoprostanes, lipid biomarkers of cellular oxidative damage. This Mus musculus (Mouse) protein is Platelet-activating factor acetylhydrolase (Pla2g7).